The chain runs to 418 residues: Glutamyl-tRNA reductase (418 aa).

Residues 49 to 52 (TCNR), Ser-109, 114 to 116 (EPQ), and Gln-120 each bind substrate. The active-site Nucleophile is Cys-50. Residue 189 to 194 (GAGETI) coordinates NADP(+).

It belongs to the glutamyl-tRNA reductase family. In terms of assembly, homodimer.

It carries out the reaction (S)-4-amino-5-oxopentanoate + tRNA(Glu) + NADP(+) = L-glutamyl-tRNA(Glu) + NADPH + H(+). It functions in the pathway porphyrin-containing compound metabolism; protoporphyrin-IX biosynthesis; 5-aminolevulinate from L-glutamyl-tRNA(Glu): step 1/2. In terms of biological role, catalyzes the NADPH-dependent reduction of glutamyl-tRNA(Glu) to glutamate 1-semialdehyde (GSA). The protein is Glutamyl-tRNA reductase of Klebsiella pneumoniae (strain 342).